We begin with the raw amino-acid sequence, 442 residues long: Cell division protein FtsA (442 aa).

This sequence belongs to the FtsA/MreB family. As to quaternary structure, self-interacts. Interacts with FtsZ.

It is found in the cell inner membrane. In terms of biological role, cell division protein that is involved in the assembly of the Z ring. May serve as a membrane anchor for the Z ring. The sequence is that of Cell division protein FtsA from Rhizobium meliloti (strain 1021) (Ensifer meliloti).